We begin with the raw amino-acid sequence, 263 residues long: 3-methyl-2-oxobutanoate hydroxymethyltransferase (263 aa).

Residues Asp45 and Asp84 each coordinate Mg(2+). Residues 45–46 (DS), Asp84, and Lys112 each bind 3-methyl-2-oxobutanoate. Glu114 provides a ligand contact to Mg(2+). Glu180 serves as the catalytic Proton acceptor.

This sequence belongs to the PanB family. As to quaternary structure, homodecamer; pentamer of dimers. Requires Mg(2+) as cofactor.

It localises to the cytoplasm. It catalyses the reaction 3-methyl-2-oxobutanoate + (6R)-5,10-methylene-5,6,7,8-tetrahydrofolate + H2O = 2-dehydropantoate + (6S)-5,6,7,8-tetrahydrofolate. It functions in the pathway cofactor biosynthesis; (R)-pantothenate biosynthesis; (R)-pantoate from 3-methyl-2-oxobutanoate: step 1/2. In terms of biological role, catalyzes the reversible reaction in which hydroxymethyl group from 5,10-methylenetetrahydrofolate is transferred onto alpha-ketoisovalerate to form ketopantoate. This Salmonella enteritidis PT4 (strain P125109) protein is 3-methyl-2-oxobutanoate hydroxymethyltransferase.